Here is a 308-residue protein sequence, read N- to C-terminus: Putative S-adenosyl-L-methionine-dependent methyltransferase Mmcs_1045 (308 aa).

Residues D133 and 162 to 163 each bind S-adenosyl-L-methionine; that span reads DL.

It belongs to the UPF0677 family.

Its function is as follows. Exhibits S-adenosyl-L-methionine-dependent methyltransferase activity. This Mycobacterium sp. (strain MCS) protein is Putative S-adenosyl-L-methionine-dependent methyltransferase Mmcs_1045.